Here is a 140-residue protein sequence, read N- to C-terminus: ATP synthase epsilon chain (140 aa).

This sequence belongs to the ATPase epsilon chain family. In terms of assembly, F-type ATPases have 2 components, CF(1) - the catalytic core - and CF(0) - the membrane proton channel. CF(1) has five subunits: alpha(3), beta(3), gamma(1), delta(1), epsilon(1). CF(0) has three main subunits: a, b and c.

The protein resides in the cell inner membrane. Its function is as follows. Produces ATP from ADP in the presence of a proton gradient across the membrane. This is ATP synthase epsilon chain from Stenotrophomonas maltophilia (strain R551-3).